A 315-amino-acid polypeptide reads, in one-letter code: MRLVFAGTPEPAVVALQKLIDSDHEVVAVLTQPDARRGRGRTLHPSAVAELAQQHGIEVLKPTSLKADTEDGQAIRQRLAELAPDCLPVVAYGQLITKDLLDVAPHGWVNLHFSLLPAWRGAAPVQASIREGDQITGATTFRIDEGLDTGVILSTIEDTIQPTDTADDLLTRLAYSGGDLLVETMTGLEQGTITPRAQEGEATYASKITTQDAQIDWSKPAEVIDRHIRAHTPGPGAWTTLVDARLKVGPISHSGEVEVAADLAPGAILAQKNSVVVGTGTTPIVLGNIQPPGKKMMNAADWARGVQLDQEAKFQ.

Position 114 to 117 (114 to 117 (SLLP)) interacts with (6S)-5,6,7,8-tetrahydrofolate.

This sequence belongs to the Fmt family.

It carries out the reaction L-methionyl-tRNA(fMet) + (6R)-10-formyltetrahydrofolate = N-formyl-L-methionyl-tRNA(fMet) + (6S)-5,6,7,8-tetrahydrofolate + H(+). Its function is as follows. Attaches a formyl group to the free amino group of methionyl-tRNA(fMet). The formyl group appears to play a dual role in the initiator identity of N-formylmethionyl-tRNA by promoting its recognition by IF2 and preventing the misappropriation of this tRNA by the elongation apparatus. This Corynebacterium glutamicum (strain R) protein is Methionyl-tRNA formyltransferase.